We begin with the raw amino-acid sequence, 425 residues long: Putative E3 ubiquitin-protein ligase UBR7 (425 aa).

The UBR-type zinc finger occupies 44 to 116 (EKCSYSQGSV…KNLECKLLPD (73 aa)). The PHD-type; atypical zinc finger occupies 132–188 (GLYCICKRPYPDPEDEIPDEMIQCVVCEDWFHGRHLGAIPPESGDFQEMVCQACMKR). Residues Lys-225 and Lys-252 each participate in a glycyl lysine isopeptide (Lys-Gly) (interchain with G-Cter in SUMO2) cross-link. A disordered region spans residues 225–246 (KPENGEHQDSTLKEDVPEQGKD). Residue Ser-264 is modified to Phosphoserine. Lys-274 is covalently cross-linked (Glycyl lysine isopeptide (Lys-Gly) (interchain with G-Cter in SUMO2)). The residue at position 354 (Ser-354) is a Phosphoserine. Lys-398 participates in a covalent cross-link: Glycyl lysine isopeptide (Lys-Gly) (interchain with G-Cter in SUMO2).

Expressed in sperm (at protein level).

It carries out the reaction S-ubiquitinyl-[E2 ubiquitin-conjugating enzyme]-L-cysteine + [acceptor protein]-L-lysine = [E2 ubiquitin-conjugating enzyme]-L-cysteine + N(6)-ubiquitinyl-[acceptor protein]-L-lysine.. It participates in protein modification; protein ubiquitination. Its function is as follows. E3 ubiquitin-protein ligase which is a component of the N-end rule pathway. Recognizes and binds to proteins bearing specific N-terminal residues that are destabilizing according to the N-end rule, leading to their ubiquitination and subsequent degradation. This is Putative E3 ubiquitin-protein ligase UBR7 (UBR7) from Homo sapiens (Human).